A 237-amino-acid polypeptide reads, in one-letter code: Aspartate/glutamate leucyltransferase (237 aa).

The protein belongs to the R-transferase family. Bpt subfamily.

The protein localises to the cytoplasm. It catalyses the reaction N-terminal L-glutamyl-[protein] + L-leucyl-tRNA(Leu) = N-terminal L-leucyl-L-glutamyl-[protein] + tRNA(Leu) + H(+). The catalysed reaction is N-terminal L-aspartyl-[protein] + L-leucyl-tRNA(Leu) = N-terminal L-leucyl-L-aspartyl-[protein] + tRNA(Leu) + H(+). Its function is as follows. Functions in the N-end rule pathway of protein degradation where it conjugates Leu from its aminoacyl-tRNA to the N-termini of proteins containing an N-terminal aspartate or glutamate. This chain is Aspartate/glutamate leucyltransferase, found in Marinobacter nauticus (strain ATCC 700491 / DSM 11845 / VT8) (Marinobacter aquaeolei).